The following is a 232-amino-acid chain: MSGTKFRTGGTKEDDLLEFVKVGKLLEVKDLIENQGVKADCKDEDERTPLHWAAAKGQISVAQYLMDNCKCSPNTNDDGGWTPLTSATSAGHTHMVKLLLEFGADPNTVNDSKRTPLHYASSKGRSDIVDLLLTHGAKNRKDDTGSAPIHRASSNGSVATVERLLKGEANINSTNNEGDTPLHIAAEYNHEDVVECLLKHGADTTIENKDSKTPIDMSSSQTIKYLIKEFKK.

6 ANK repeats span residues 45-75, 79-108, 112-141, 144-173, 177-206, and 210-232; these read DERT…SPNT, GGWT…DPNT, SKRT…KNRK, TGSA…NINS, EGDT…DTTI, and DSKT…EFKK.

Its function is as follows. Acts as a chaperone during the assembly of the 26S proteasome, specifically of the 19S regulatory complex (RC). This chain is 26S proteasome non-ATPase regulatory subunit 10 (psmD10), found in Dictyostelium discoideum (Social amoeba).